A 491-amino-acid chain; its full sequence is Cholesterol 22-monohydroxylase CYP90B51 (491 aa).

Residues 6 to 26 (ITFYCLSSILSVLLIFIFILI) form a helical membrane-spanning segment. Heme is bound at residue cysteine 437.

This sequence belongs to the cytochrome P450 family. Mainly expressed in leaves and seed pods and, to a lower extent, in flowers and stems.

It localises to the membrane. It carries out the reaction cholesterol + reduced [NADPH--hemoprotein reductase] + O2 = (22S)-22-hydroxycholesterol + oxidized [NADPH--hemoprotein reductase] + H2O + H(+). It functions in the pathway steroid metabolism; cholesterol metabolism. Canonical brassinosteroid (BR)-biosynthetic enzyme capable of converting cholesterol to 22S-hydroxycholesterol via sterol-C22 hydroxylation. The protein is Cholesterol 22-monohydroxylase CYP90B51 of Trigonella foenum-graecum (Fenugreek).